A 543-amino-acid polypeptide reads, in one-letter code: MAKDIKFSADARAAMVRGVDMLADTVKVTLGPKGRNVVLEKAFGSPLITNDGVTIAKEIELEDHFENMGAKLVSEVASKTNDIAGDGTTTATVLTQAIVHEGLKNVTAGANPIGIRRGIETATATAVEALKAIAQPVSGKEAIAQVAAVSSRSEKVGEYISEAMERVGNDGVITIEESRGMETELEVVEGMQFDRGYLSQYMVTDNEKMVADLENPFILITDKKVSNIQDILPLLEEVLKTNRPLLIIADDVDGEALPTLVLNKIRGTFNVVAVKAPGFGDRRKAMLEDIAILTGGTVITEDLGLELKDATMTALGQAAKITVDKDSTVIVEGSGSSEAIANRIALIKSQLETTTSDFDREKLQERLAKLAGGVAVIKVGAPTETALKEMKLRIEDALNATRAAVEEGIVAGGGTALITVIEKVAALELEGDDATGRNIVLRALEEPVRQIALNAGYEGSVIIDKLKNSPAGTGFNAATGEWVDMIKTGIIDPVKVTRSALQNAASVASLILTTEAVVANKPEPAAPAPAMPAGMDPGMMGGF.

ATP is bound by residues 29 to 32 (TLGP), 86 to 90 (DGTTT), glycine 413, 476 to 478 (NAA), and aspartate 492.

This sequence belongs to the chaperonin (HSP60) family. As to quaternary structure, forms a cylinder of 14 subunits composed of two heptameric rings stacked back-to-back. Interacts with the co-chaperonin GroES.

Its subcellular location is the cytoplasm. It catalyses the reaction ATP + H2O + a folded polypeptide = ADP + phosphate + an unfolded polypeptide.. Its function is as follows. Together with its co-chaperonin GroES, plays an essential role in assisting protein folding. The GroEL-GroES system forms a nano-cage that allows encapsulation of the non-native substrate proteins and provides a physical environment optimized to promote and accelerate protein folding. This is Chaperonin GroEL from Streptococcus pyogenes serotype M18 (strain MGAS8232).